The chain runs to 618 residues: Keratin, type I cytoskeletal 9 (618 aa).

Positions 1–49 are disordered; that stretch reads MSFRQISSSFRSSSGSSCGGGGGRGASRGSMRSSFGRSSRAGGESRFGS. The interval 1–137 is head; it reads MSFRQISSSF…GGEGSILNTN (137 aa). Low complexity predominate over residues 7–16; that stretch reads SSSFRSSSGS. Phosphoserine occurs at positions 14 and 17. Positions 17–26 are enriched in gly residues; it reads SCGGGGGRGA. The span at 27–49 shows a compositional bias: low complexity; it reads SRGSMRSSFGRSSRAGGESRFGS. Residues 138 to 173 form a coil 1A region; it reads EKVVMQNLNSRLASYMDKVQELEEDNANLEKQIQEW. One can recognise an IF rod domain in the interval 138 to 450; the sequence is EKVVMQNLNS…KLLEGGQQDF (313 aa). The tract at residues 174-192 is linker 1; sequence YSRKGNRVFQKDYSHYYNT. Residues 193 to 284 are coil 1B; the sequence is IEDLKDRIVD…KSHKEEMNQL (92 aa). Residues 285–307 are linker 12; the sequence is TGLNDGDVNVEINVAPSTDLTQV. Residues 308 to 446 are coil 2; the sequence is LNDMREEYEH…ETYRKLLEGG (139 aa). Residues 447 to 609 are tail; sequence QQDFESSGAG…GGGNTRPSQS (163 aa). A disordered region spans residues 449–618; sequence DFESSGAGQI…SQSSQIPRLR (170 aa). Gly residues predominate over residues 456 to 603; sequence GQIGFGSGKG…GSGGSYGGGN (148 aa). Positions 607-618 are enriched in low complexity; that stretch reads SQSQSSQIPRLR.

It belongs to the intermediate filament family. As to quaternary structure, heterotetramer of two type I and two type II keratins. In terms of tissue distribution, expressed in the perinuclear ring of spermatid manchettes within testis and in keratinocytes of the suprabasal layer of footpad epidermis (at protein level).

Its function is as follows. May serve an important special function either in the mature palmar and plantar skin tissue or in the morphogenetic program of the formation of these tissues. Plays a role in keratin filament assembly. May be involved in spermatid nuclear shaping and sperm development. The chain is Keratin, type I cytoskeletal 9 (Krt9) from Rattus norvegicus (Rat).